The primary structure comprises 397 residues: Argininosuccinate synthase (397 aa).

Residue 7 to 15 (LYSGGLDTS) coordinates ATP. Position 83 (tyrosine 83) interacts with L-citrulline. Glycine 113 contacts ATP. Threonine 115, asparagine 119, and aspartate 120 together coordinate L-aspartate. An L-citrulline-binding site is contributed by asparagine 119. Positions 123, 169, 178, 253, and 265 each coordinate L-citrulline.

Belongs to the argininosuccinate synthase family. Type 1 subfamily. In terms of assembly, homotetramer.

The protein localises to the cytoplasm. It carries out the reaction L-citrulline + L-aspartate + ATP = 2-(N(omega)-L-arginino)succinate + AMP + diphosphate + H(+). It participates in amino-acid biosynthesis; L-arginine biosynthesis; L-arginine from L-ornithine and carbamoyl phosphate: step 2/3. The protein is Argininosuccinate synthase of Thermoplasma volcanium (strain ATCC 51530 / DSM 4299 / JCM 9571 / NBRC 15438 / GSS1).